Here is a 552-residue protein sequence, read N- to C-terminus: Pyrophosphate--fructose 6-phosphate 1-phosphotransferase subunit beta (552 aa).

Glycine 90 is a binding site for diphosphate. A Mg(2+)-binding site is contributed by aspartate 184. Substrate is bound by residues 212–214, 251–252, 259–261, glutamate 320, and 425–428; these read TID, KY, MGR, and YEGR. Aspartate 214 (proton acceptor) is an active-site residue.

It belongs to the phosphofructokinase type A (PFKA) family. PPi-dependent PFK group II subfamily. Clade 'Long' sub-subfamily. Tetramer of two alpha (regulatory) and two beta (catalytic) chains. The cofactor is Mg(2+).

It localises to the cytoplasm. The catalysed reaction is beta-D-fructose 6-phosphate + diphosphate = beta-D-fructose 1,6-bisphosphate + phosphate + H(+). Its pathway is carbohydrate degradation; glycolysis; D-glyceraldehyde 3-phosphate and glycerone phosphate from D-glucose: step 3/4. With respect to regulation, allosterically activated by fructose 2,6-bisphosphate. Its function is as follows. Catalytic subunit of pyrophosphate--fructose 6-phosphate 1-phosphotransferase. Catalyzes the phosphorylation of D-fructose 6-phosphate, the first committing step of glycolysis. Uses inorganic phosphate (PPi) as phosphoryl donor instead of ATP like common ATP-dependent phosphofructokinases (ATP-PFKs), which renders the reaction reversible, and can thus function both in glycolysis and gluconeogenesis. In Ricinus communis (Castor bean), this protein is Pyrophosphate--fructose 6-phosphate 1-phosphotransferase subunit beta.